A 770-amino-acid chain; its full sequence is tRNA(Met) cytidine acetyltransferase TmcA 2 (770 aa).

Q209 and R390 together coordinate ATP. The 151-residue stretch at 458–608 (MIMLDGIHHK…YPVVVIRPIS (151 aa)) folds into the N-acetyltransferase domain. Residue 533 to 535 (IAV) coordinates acetyl-CoA.

The protein belongs to the TmcA family.

The protein localises to the cytoplasm. It catalyses the reaction cytidine(34) in elongator tRNA(Met) + acetyl-CoA + ATP + H2O = N(4)-acetylcytidine(34) in elongator tRNA(Met) + ADP + phosphate + CoA + H(+). The catalysed reaction is a cytidine in RNA + acetyl-CoA + ATP + H2O = an N(4)-acetylcytidine in RNA + ADP + phosphate + CoA + H(+). It carries out the reaction a cytidine in tRNA + acetyl-CoA + ATP + H2O = an N(4)-acetylcytidine in tRNA + ADP + phosphate + CoA + H(+). The enzyme catalyses a cytidine in mRNA + acetyl-CoA + ATP + H2O = an N(4)-acetylcytidine in mRNA + ADP + phosphate + CoA + H(+). In terms of biological role, catalyzes the formation of N(4)-acetylcytidine (ac(4)C) at the wobble position of tRNA(Met), by using acetyl-CoA as an acetyl donor and ATP (or GTP). Its function is as follows. Catalyzes the formation of 41 N(4)-acetylcytidine (ac(4)C) sites in RNA, almost always on the middle C of a CCG motif. Modifications are found mostly in tRNA, with small amounts found in rRNA and mRNA. This chain is tRNA(Met) cytidine acetyltransferase TmcA 2, found in Saccharolobus solfataricus (strain ATCC 35092 / DSM 1617 / JCM 11322 / P2) (Sulfolobus solfataricus).